The primary structure comprises 292 residues: NAD kinase (292 aa).

Residue D72 is the Proton acceptor of the active site. Residues 72–73, 146–147, H157, R174, D176, and 187–192 contribute to the NAD(+) site; these read DG, NE, and TAYSLS.

The protein belongs to the NAD kinase family. It depends on a divalent metal cation as a cofactor.

It is found in the cytoplasm. The enzyme catalyses NAD(+) + ATP = ADP + NADP(+) + H(+). Functionally, involved in the regulation of the intracellular balance of NAD and NADP, and is a key enzyme in the biosynthesis of NADP. Catalyzes specifically the phosphorylation on 2'-hydroxyl of the adenosine moiety of NAD to yield NADP. The chain is NAD kinase from Shewanella loihica (strain ATCC BAA-1088 / PV-4).